Consider the following 290-residue polypeptide: MARPGNIALVTARSAGLRGSGQPQGRRQQQAQGQQRSASLPGQRSKEKKKVNCKPKNQDEQEIPFRLREIMRSRQEMKKTLSNKKRKKEAQVAFKKTLEKEAKGEEPDIAVPKFKQRKGESDVAYVQRMEQEAQHVLFLSKNQAPRQPEVQAAPKKEKSERKKAFQKRRLEKAQRKREARAVDRLEQELLKDTVKFGEVVLQPPELTVQPRRSTSRDAPGKKSLMLKKMLLGPGGGSPAPATSLARQRILGEERERAVQAYRALKKLHRQEMTPAQPPGSSFQRQGHACL.

Disordered stretches follow at residues 1-92, 98-117, 139-181, and 269-290; these read MARP…EAQV, LEKEAKGEEPDIAVPKFKQR, LSKN…EARA, and RQEMTPAQPPGSSFQRQGHACL. Low complexity predominate over residues 20–39; that stretch reads SGQPQGRRQQQAQGQQRSAS. Positions 56–79 are enriched in basic and acidic residues; it reads KNQDEQEIPFRLREIMRSRQEMKK. Residues 66-89 are a coiled coil; it reads RLREIMRSRQEMKKTLSNKKRKKE. A compositionally biased stretch (basic and acidic residues) spans 154 to 163; that stretch reads PKKEKSERKK. Residues 155 to 192 are a coiled coil; the sequence is KKEKSERKKAFQKRRLEKAQRKREARAVDRLEQELLKD. Over residues 164 to 178 the composition is skewed to basic residues; it reads AFQKRRLEKAQRKRE.

It is found in the chromosome. In Mus musculus (Mouse), this protein is Coiled-coil domain-containing protein 137 (Ccdc137).